The following is a 316-amino-acid chain: tRNA dimethylallyltransferase (316 aa).

17 to 24 (GPTASGKT) contributes to the ATP binding site. Residue 19–24 (TASGKT) coordinates substrate. Interaction with substrate tRNA regions lie at residues 42–45 (DSAL), 166–170 (QRLSR), 247–252 (RCVGYR), and 280–287 (KRQITWLR).

This sequence belongs to the IPP transferase family. As to quaternary structure, monomer. The cofactor is Mg(2+).

It catalyses the reaction adenosine(37) in tRNA + dimethylallyl diphosphate = N(6)-dimethylallyladenosine(37) in tRNA + diphosphate. Its function is as follows. Catalyzes the transfer of a dimethylallyl group onto the adenine at position 37 in tRNAs that read codons beginning with uridine, leading to the formation of N6-(dimethylallyl)adenosine (i(6)A). The chain is tRNA dimethylallyltransferase from Escherichia coli O6:K15:H31 (strain 536 / UPEC).